Consider the following 473-residue polypeptide: ATP synthase subunit beta (473 aa).

Residue 158–165 (GGAGVGKT) coordinates ATP.

This sequence belongs to the ATPase alpha/beta chains family. As to quaternary structure, F-type ATPases have 2 components, CF(1) - the catalytic core - and CF(0) - the membrane proton channel. CF(1) has five subunits: alpha(3), beta(3), gamma(1), delta(1), epsilon(1). CF(0) has three main subunits: a(1), b(2) and c(9-12). The alpha and beta chains form an alternating ring which encloses part of the gamma chain. CF(1) is attached to CF(0) by a central stalk formed by the gamma and epsilon chains, while a peripheral stalk is formed by the delta and b chains.

It localises to the cell membrane. The catalysed reaction is ATP + H2O + 4 H(+)(in) = ADP + phosphate + 5 H(+)(out). In terms of biological role, produces ATP from ADP in the presence of a proton gradient across the membrane. The catalytic sites are hosted primarily by the beta subunits. This is ATP synthase subunit beta from Geobacillus thermoleovorans (Bacillus thermoleovorans).